The following is a 598-amino-acid chain: Proline--tRNA ligase (598 aa).

The protein belongs to the class-II aminoacyl-tRNA synthetase family. ProS type 1 subfamily. Homodimer.

Its subcellular location is the cytoplasm. It catalyses the reaction tRNA(Pro) + L-proline + ATP = L-prolyl-tRNA(Pro) + AMP + diphosphate. Functionally, catalyzes the attachment of proline to tRNA(Pro) in a two-step reaction: proline is first activated by ATP to form Pro-AMP and then transferred to the acceptor end of tRNA(Pro). As ProRS can inadvertently accommodate and process non-cognate amino acids such as alanine and cysteine, to avoid such errors it has two additional distinct editing activities against alanine. One activity is designated as 'pretransfer' editing and involves the tRNA(Pro)-independent hydrolysis of activated Ala-AMP. The other activity is designated 'posttransfer' editing and involves deacylation of mischarged Ala-tRNA(Pro). The misacylated Cys-tRNA(Pro) is not edited by ProRS. This Synechococcus sp. (strain CC9311) protein is Proline--tRNA ligase.